The following is a 244-amino-acid chain: 7-cyano-7-deazaguanine synthase (244 aa).

14–24 provides a ligand contact to ATP; it reads FSGGQDSATCV. Residues C202, C217, C220, and C223 each coordinate Zn(2+).

Belongs to the QueC family. It depends on Zn(2+) as a cofactor.

The catalysed reaction is 7-carboxy-7-deazaguanine + NH4(+) + ATP = 7-cyano-7-deazaguanine + ADP + phosphate + H2O + H(+). It functions in the pathway purine metabolism; 7-cyano-7-deazaguanine biosynthesis. Its function is as follows. Catalyzes the ATP-dependent conversion of 7-carboxy-7-deazaguanine (CDG) to 7-cyano-7-deazaguanine (preQ(0)). In Burkholderia cenocepacia (strain HI2424), this protein is 7-cyano-7-deazaguanine synthase.